We begin with the raw amino-acid sequence, 447 residues long: Argininosuccinate synthase (447 aa).

ATP-binding positions include 17 to 25 (AFSGGLDTS) and Ala-43. Tyr-99 is a binding site for L-citrulline. Residues Gly-129 and Thr-131 each contribute to the ATP site. The L-aspartate site is built by Thr-131, Asn-135, and Asp-136. Asn-135 lines the L-citrulline pocket. Residue Asp-136 participates in ATP binding. Arg-139 and Ser-192 together coordinate L-citrulline. An ATP-binding site is contributed by Asp-194. L-citrulline-binding residues include Thr-201, Glu-203, and Glu-280.

It belongs to the argininosuccinate synthase family. Type 2 subfamily. As to quaternary structure, homotetramer.

The protein resides in the cytoplasm. The catalysed reaction is L-citrulline + L-aspartate + ATP = 2-(N(omega)-L-arginino)succinate + AMP + diphosphate + H(+). The protein operates within amino-acid biosynthesis; L-arginine biosynthesis; L-arginine from L-ornithine and carbamoyl phosphate: step 2/3. This is Argininosuccinate synthase (argG) from Salmonella typhi.